The sequence spans 260 residues: ARL14 effector protein (260 aa).

N-acetylmethionine is present on M1. K177 is covalently cross-linked (Glycyl lysine isopeptide (Lys-Gly) (interchain with G-Cter in SUMO2)). Phosphoserine is present on S183.

In terms of assembly, interacts with ARL14 and MYO1E.

Its subcellular location is the cytoplasm. In terms of biological role, through its interaction with ARL14 and MYO1E, may connect MHC class II-containing cytoplasmic vesicles to the actin network and hence controls the movement of these vesicles along the actin cytoskeleton in dendritic cells. The chain is ARL14 effector protein (ARL14EP) from Bos taurus (Bovine).